The primary structure comprises 277 residues: Carbonyl reductase [NADPH] 1 (277 aa).

N-acetylserine is present on serine 2. Serine 2 and serine 30 each carry phosphoserine. NADP(+)-binding positions include 10-34, 63-64, and asparagine 90; these read VTGG…GDVV and DI. Glutathione-binding positions include 95–97 and glutamine 106; that span reads FKV. Serine 140 lines the substrate pocket. 193 to 194 provides a ligand contact to glutathione; it reads AY. Tyrosine 194 functions as the Proton acceptor in the catalytic mechanism. NADP(+) contacts are provided by residues 194 to 198 and 231 to 233; these read YGVTK and VRT. The residue at position 239 (lysine 239) is an N6-1-carboxyethyl lysine.

Belongs to the short-chain dehydrogenases/reductases (SDR) family. As to quaternary structure, monomer.

It localises to the cytoplasm. The catalysed reaction is a secondary alcohol + NADP(+) = a ketone + NADPH + H(+). It catalyses the reaction prostaglandin F2alpha + NADP(+) = prostaglandin E2 + NADPH + H(+). It carries out the reaction prostaglandin E1 + NADP(+) = 15-oxoprostaglandin E1 + NADPH + H(+). The enzyme catalyses menadione + NADPH + H(+) = menadiol + NADP(+). The catalysed reaction is prostaglandin D2 + NADP(+) = 15-oxoprostaglandin D2 + NADPH + H(+). It catalyses the reaction prostaglandin E2 + NADP(+) = 15-oxoprostaglandin E2 + NADPH + H(+). It carries out the reaction prostaglandin F2alpha + NADP(+) = 15-oxoprostaglandin F2alpha + NADPH + H(+). The enzyme catalyses daunorubicin + NADPH + H(+) = 13-dihydrodaunorubicin + NADP(+). The catalysed reaction is S-nitrosoglutathione + NADPH + H(+) = S-(hydroxysulfenamide)glutathione + NADP(+). It catalyses the reaction a primary alcohol + NADP(+) = an aldehyde + NADPH + H(+). It carries out the reaction cortisol + NADPH + H(+) = 20beta-dihydrocortisol + NADP(+). The enzyme catalyses corticosterone + NADPH + H(+) = 20beta-dihydrocorticosterone + NADP(+). Its function is as follows. NADPH-dependent reductase with broad substrate specificity. Catalyzes the reduction of a wide variety of carbonyl compounds including quinones, prostaglandins, menadione, plus various xenobiotics. Catalyzes the reduction of the antitumor anthracyclines doxorubicin and daunorubicin to the cardiotoxic compounds doxorubicinol and daunorubicinol. Can convert prostaglandin E to prostaglandin F2-alpha. Can bind glutathione, which explains its higher affinity for glutathione-conjugated substrates. Catalyzes the reduction of S-nitrosoglutathione. In addition, participates in the glucocorticoid metabolism by catalyzing the NADPH-dependent cortisol/corticosterone into 20beta-dihydrocortisol (20b-DHF) or 20beta-corticosterone (20b-DHB), which are weak agonists of NR3C1 and NR3C2 in adipose tissue. This chain is Carbonyl reductase [NADPH] 1, found in Pongo abelii (Sumatran orangutan).